A 205-amino-acid polypeptide reads, in one-letter code: GTP-binding protein rho3 (205 aa).

20–27 (GDGAAGKT) contributes to the GTP binding site. The short motif at 42–50 (YEPTIFENY) is the Effector region element. Residues 67-71 (DTAGQ) and 125-128 (LKCD) contribute to the GTP site. C202 carries the post-translational modification Cysteine methyl ester. The S-geranylgeranyl cysteine moiety is linked to residue C202. Residues 203 to 205 (IIA) constitute a propeptide, removed in mature form.

Belongs to the small GTPase superfamily. Rho family. Interacts with for3. In terms of processing, palmitoylated by the erf2-erf4 complex.

Its subcellular location is the cell membrane. Functionally, involved in controlling cell shape and septation. Regulates cell separation by modulating the function of the exocyst complex. Involved in post-Golgi vesicle transport. Involved in driving sexual development in a palmitoylation-dependent manner. The protein is GTP-binding protein rho3 (rho3) of Schizosaccharomyces pombe (strain 972 / ATCC 24843) (Fission yeast).